The primary structure comprises 191 residues: Peptidyl-tRNA hydrolase (191 aa).

Tyrosine 14 contacts tRNA. Histidine 19 acts as the Proton acceptor in catalysis. Tyrosine 64, asparagine 66, and asparagine 112 together coordinate tRNA.

Belongs to the PTH family. In terms of assembly, monomer.

The protein localises to the cytoplasm. The enzyme catalyses an N-acyl-L-alpha-aminoacyl-tRNA + H2O = an N-acyl-L-amino acid + a tRNA + H(+). In terms of biological role, hydrolyzes ribosome-free peptidyl-tRNAs (with 1 or more amino acids incorporated), which drop off the ribosome during protein synthesis, or as a result of ribosome stalling. Catalyzes the release of premature peptidyl moieties from peptidyl-tRNA molecules trapped in stalled 50S ribosomal subunits, and thus maintains levels of free tRNAs and 50S ribosomes. In Clostridium botulinum (strain Eklund 17B / Type B), this protein is Peptidyl-tRNA hydrolase.